Reading from the N-terminus, the 195-residue chain is Group XIIB secretory phospholipase A2-like protein (195 aa).

Residues M1–A19 form the signal peptide. The Ca(2+) site is built by S89, Y91, L93, and D116.

It belongs to the phospholipase A2 family. The cofactor is Ca(2+).

The protein localises to the secreted. In terms of biological role, not known; does not seem to have catalytic activity. The polypeptide is Group XIIB secretory phospholipase A2-like protein (Pla2g12b) (Mus musculus (Mouse)).